A 235-amino-acid chain; its full sequence is Large ribosomal subunit protein uL1 (235 aa).

Belongs to the universal ribosomal protein uL1 family. Part of the 50S ribosomal subunit.

In terms of biological role, binds directly to 23S rRNA. The L1 stalk is quite mobile in the ribosome, and is involved in E site tRNA release. Protein L1 is also a translational repressor protein, it controls the translation of the L11 operon by binding to its mRNA. In Arthrobacter sp. (strain FB24), this protein is Large ribosomal subunit protein uL1.